The following is a 573-amino-acid chain: Cytochrome P450 monooxygenase GME11363 (573 aa).

The chain crosses the membrane as a helical span at residues 10 to 30; it reads IGVVAAVLLAALILLYRAALP. A heme-binding site is contributed by cysteine 519.

Belongs to the cytochrome P450 family. Requires heme as cofactor.

It is found in the membrane. The protein operates within secondary metabolite biosynthesis. Functionally, cytochrome P450 monooxygenase; part of the gene cluster that mediates the biosynthesis of dibenzodioxocinones such as pestalotiollide B, a novel class of inhibitors against cholesterol ester transfer protein (CEPT). The biosynthesis initiates from condensation of acetate and malonate units catalyzed by the non-reducing PKS pks8/GME11356. Pks8/GME11356 lacks a thioesterase (TE) domain, which is important to the cyclizing of the third ring of atrochrysone carboxylic acid, and the esterase GME11355 might play the role of TE and catalyzes the cyclization reaction of the C ring. The lactamase-like protein GME11357 (or other beta-lactamases in Pestalotiopsis microspora) probably hydrolyzes the thioester bond between the ACP of pks8/GME11356 and the intermediate to release atrochrysone carboxylic acid, which is spontaneously dehydrates to form endocrocin anthrone. Endocrocin anthrone is further converted to emodin via the endocrocin intermediate. Emodin is then oxidized by several enzymes such as the Baeyer-Villiger oxidase GME11358, the oxidoreductase GME11367, the short chain dehydrogenase/reductase GME11373, as well as by other oxidoreductases from the cluster, to modify the A and C rings and open the B ring, and finally yield monodictyphenone. The prenyltransferase GME11375 may catalyze the addition reaction between the C5 side chains and the carbon bone of dibenzodioxocinones. The remaining biochemical reactions to the final product dibenzodioxocinones should be methylation catalyzed by methyltransferase GME11366 and reduction and lactonization reaction catalyzed by a series of oxidordeuctases. The sequence is that of Cytochrome P450 monooxygenase GME11363 from Pestalotiopsis microspora.